Reading from the N-terminus, the 276-residue chain is Large ribosomal subunit protein uL2 (276 aa).

The segment at 221–276 (RGSAMNPNDHPHGGGEGRAPIGRKSPMTPWGKKARGVKTRDRKKASNALIIRRRTK) is disordered. Residues 252–276 (KKARGVKTRDRKKASNALIIRRRTK) show a composition bias toward basic residues.

Belongs to the universal ribosomal protein uL2 family. Part of the 50S ribosomal subunit. Forms a bridge to the 30S subunit in the 70S ribosome.

Functionally, one of the primary rRNA binding proteins. Required for association of the 30S and 50S subunits to form the 70S ribosome, for tRNA binding and peptide bond formation. It has been suggested to have peptidyltransferase activity; this is somewhat controversial. Makes several contacts with the 16S rRNA in the 70S ribosome. This chain is Large ribosomal subunit protein uL2, found in Aster yellows phytoplasma.